Reading from the N-terminus, the 148-residue chain is uncharacterized protein (148 aa).

Over residues 1-11 the composition is skewed to polar residues; sequence MKPRNINNSLP. The segment at 1 to 31 is disordered; that stretch reads MKPRNINNSLPLQPLVPDQENKNKKNEEKSV. The segment covering 19 to 30 has biased composition (basic and acidic residues); sequence QENKNKKNEEKS.

This is an uncharacterized protein from Escherichia coli (strain K12).